Consider the following 96-residue polypeptide: DNA-directed RNA polymerase subunit Rpo11 (96 aa).

This sequence belongs to the archaeal Rpo11/eukaryotic RPB11/RPC19 RNA polymerase subunit family. In terms of assembly, part of the RNA polymerase complex.

It localises to the cytoplasm. The enzyme catalyses RNA(n) + a ribonucleoside 5'-triphosphate = RNA(n+1) + diphosphate. Functionally, DNA-dependent RNA polymerase (RNAP) catalyzes the transcription of DNA into RNA using the four ribonucleoside triphosphates as substrates. The protein is DNA-directed RNA polymerase subunit Rpo11 of Methanococcus maripaludis (strain DSM 14266 / JCM 13030 / NBRC 101832 / S2 / LL).